We begin with the raw amino-acid sequence, 551 residues long: Eukaryotic translation initiation factor 3 subunit D-2 (551 aa).

The tract at residues arginine 108–arginine 152 is disordered. Over residues threonine 119–alanine 128 the composition is skewed to gly residues. Residues glutamine 290–proline 304 are RNA gate. Residues alanine 530–asparagine 551 are disordered. Residues phenylalanine 531–serine 541 show a composition bias toward acidic residues.

The protein belongs to the eIF-3 subunit D family. Component of the eukaryotic translation initiation factor 3 (eIF-3) complex. The eIF-3 complex interacts with pix.

It localises to the cytoplasm. Its function is as follows. mRNA cap-binding component of the eukaryotic translation initiation factor 3 (eIF-3) complex, which is involved in protein synthesis of a specialized repertoire of mRNAs and, together with other initiation factors, stimulates binding of mRNA and methionyl-tRNAi to the 40S ribosome. The eIF-3 complex specifically targets and initiates translation of a subset of mRNAs involved in cell proliferation. In the eIF-3 complex, eif3d specifically recognizes and binds the 7-methylguanosine cap of a subset of mRNAs. The polypeptide is Eukaryotic translation initiation factor 3 subunit D-2 (Drosophila yakuba (Fruit fly)).